The primary structure comprises 244 residues: MGNKNIKPSKENRLSILYKDRMDSFKRGSWATSSFREKSHATIQRFLSLRREHVKVDHPDKFLELKREIYAIIQKSSSIDVDKRTKLMSNIKTMMINPFMIEGLMTSLESLDPDNKMSYSSVMILGEFDIINISDNKAAFEFINSLLKSLLLLNTSQLKLLEYSISNDLLYTHINALEYIIKNTFNVPERQLILRCQYLTPIFSDLLKYAGLTIKSNILMWNKKFIKPVSDLYTSMQLLHCVTV.

This sequence belongs to the orthopoxvirus A47 protein family.

The polypeptide is Protein A47 (Variola virus).